The primary structure comprises 1048 residues: NACHT, LRR and PYD domains-containing protein 8 (1048 aa).

The tract at residues 1–23 (MSDVNPPSDTPIPFSSSSTHSSH) is disordered. Residues 11-23 (PIPFSSSSTHSSH) show a composition bias toward low complexity. Positions 33–131 (PGSPCENGVM…NAILPTLEPE (99 aa)) constitute a Pyrin domain. Residues 204–527 (KTVAIQGAPG…FYVLCFPQRL (324 aa)) enclose the NACHT domain. Position 210-217 (210-217 (GAPGIGKT)) interacts with ATP. LRR repeat units follow at residues 815-838 (NGHLKTLILRKNSLENCGAYYLSV), 839-861 (AQLERLSIENCNLTQLTCESLAS), 866-890 (SKMLTHLSLAENALKDEGAKHIWNA), 923-950 (NKTLKSLDLSFNSLKDDGVILLCEALKN), and 980-1007 (NQHLRHLDLSKNAIGVYGILTLCEAFSS). The segment at 1029–1048 (PTPHPPDFTGKSDCLSQINP) is disordered.

This sequence belongs to the NLRP family.

The protein resides in the cytoplasm. Involved in inflammation. This chain is NACHT, LRR and PYD domains-containing protein 8 (NLRP8), found in Homo sapiens (Human).